The following is a 247-amino-acid chain: Homeobox protein BarH-like 1b (247 aa).

Disordered stretches follow at residues 118 to 138 (RGKL…GRRS) and 197 to 247 (GGGL…SQEE). Positions 135 to 194 (GRRSRTVFTELQLMGLEKRFEKQKYLSTPDRIDLAESLGLSQLQVKTWYQNRRMKWKKIV) form a DNA-binding region, homeobox. A compositionally biased stretch (basic and acidic residues) spans 223 to 234 (EQERARDAEKPP).

It belongs to the BAR homeobox family. Interacts with serum response factor (SRF). Expressed in smooth muscle cells of the upper digestive organs and their attached arteries and to craniofacial structures.

It is found in the nucleus. Functionally, transcription factor which is involved with the serum response factor (SRF) in the smooth muscle cell-specific transcription of the beta-tropomyosin gene in the upper digestive organs and their attached arteries. In Gallus gallus (Chicken), this protein is Homeobox protein BarH-like 1b (BARX1B).